A 226-amino-acid polypeptide reads, in one-letter code: Apoptosis regulator OPG045 (226 aa).

This sequence belongs to the orthopoxvirus OPG045 family. Homodimer. Interacts with host pro-apoptotic protein BCL2L11 (via BH3 domain). Interacts with host NLRP1. Interacts with host BAK.

It is found in the host mitochondrion outer membrane. It localises to the host cytoplasm. In terms of biological role, plays a role in evading host innate immune response by inhibiting host inflammasome activation. Interacts with and inhibits NLR-mediated interleukin-1 beta/IL1B production in infected cells. At the host mitochondria outer membrane, interacts with the BH3 domain of host BAK and prevents BAK from binding active BAX. In turn, host apoptosis is inhibited. The sequence is that of Apoptosis regulator OPG045 (OPG045) from Homo sapiens (Human).